Consider the following 340-residue polypeptide: Phenylalanine--tRNA ligase alpha subunit (340 aa).

Glu255 provides a ligand contact to Mg(2+).

It belongs to the class-II aminoacyl-tRNA synthetase family. Phe-tRNA synthetase alpha subunit type 1 subfamily. As to quaternary structure, tetramer of two alpha and two beta subunits. Mg(2+) is required as a cofactor.

It is found in the cytoplasm. It catalyses the reaction tRNA(Phe) + L-phenylalanine + ATP = L-phenylalanyl-tRNA(Phe) + AMP + diphosphate + H(+). This Moorella thermoacetica (strain ATCC 39073 / JCM 9320) protein is Phenylalanine--tRNA ligase alpha subunit.